Consider the following 326-residue polypeptide: D-alanine--D-alanine ligase (326 aa).

The region spanning 121 to 320 (ISVLRPYGIK…LKDLFGSTIE (200 aa)) is the ATP-grasp domain. Residue 149–204 (VDKVGLPCFVKANRAGSSFGVTKVKTEDEIISAAKTAFTEDDEAIIESFLDGTEVS) participates in ATP binding. Mg(2+)-binding residues include E275, E287, and N289.

This sequence belongs to the D-alanine--D-alanine ligase family. The cofactor is Mg(2+). Mn(2+) is required as a cofactor.

It localises to the cytoplasm. The catalysed reaction is 2 D-alanine + ATP = D-alanyl-D-alanine + ADP + phosphate + H(+). It functions in the pathway cell wall biogenesis; peptidoglycan biosynthesis. Functionally, cell wall formation. The protein is D-alanine--D-alanine ligase of Christiangramia forsetii (strain DSM 17595 / CGMCC 1.15422 / KT0803) (Gramella forsetii).